Reading from the N-terminus, the 209-residue chain is Large ribosomal subunit protein uL3 (209 aa).

An N5-methylglutamine modification is found at Gln-150.

Belongs to the universal ribosomal protein uL3 family. As to quaternary structure, part of the 50S ribosomal subunit. Forms a cluster with proteins L14 and L19. Methylated by PrmB.

Its function is as follows. One of the primary rRNA binding proteins, it binds directly near the 3'-end of the 23S rRNA, where it nucleates assembly of the 50S subunit. The chain is Large ribosomal subunit protein uL3 from Salmonella arizonae (strain ATCC BAA-731 / CDC346-86 / RSK2980).